The following is a 96-amino-acid chain: Methanol dehydrogenase [cytochrome c] subunit 2 (96 aa).

Residues 1 to 22 (MKTTLIAAAIVALSGLAAPALA) form the signal peptide. A disulfide bridge connects residues Cys-28 and Cys-34. The interval 45 to 75 (IAGSKYDPKHDPKELNKQADSIKQMEERNKK) is disordered. Basic and acidic residues predominate over residues 50-61 (YDPKHDPKELNK).

The protein belongs to the methanol dehydrogenase subunit 2 family. In terms of assembly, heterotetramer composed of 2 alpha and 2 beta subunits.

It is found in the periplasm. It carries out the reaction 2 Fe(III)-[cytochrome cL] + a primary alcohol = 2 Fe(II)-[cytochrome cL] + an aldehyde + 2 H(+). In terms of biological role, catalyzes the oxidation of primary alcohols including methanol. This Methylorubrum extorquens (strain ATCC 14718 / DSM 1338 / JCM 2805 / NCIMB 9133 / AM1) (Methylobacterium extorquens) protein is Methanol dehydrogenase [cytochrome c] subunit 2 (moxI).